Reading from the N-terminus, the 362-residue chain is Sulfate/thiosulfate import ATP-binding protein CysA (362 aa).

Residues 3-237 (IEIHDLSKQF…PANPFVYEFL (235 aa)) form the ABC transporter domain. 35–42 (GPSGSGKT) lines the ATP pocket.

This sequence belongs to the ABC transporter superfamily. Sulfate/tungstate importer (TC 3.A.1.6) family. In terms of assembly, the complex is composed of two ATP-binding proteins (CysA), two transmembrane proteins (CysT and CysW) and a solute-binding protein (CysP).

It is found in the cell inner membrane. The catalysed reaction is sulfate(out) + ATP + H2O = sulfate(in) + ADP + phosphate + H(+). The enzyme catalyses thiosulfate(out) + ATP + H2O = thiosulfate(in) + ADP + phosphate + H(+). Functionally, part of the ABC transporter complex CysAWTP involved in sulfate/thiosulfate import. Responsible for energy coupling to the transport system. This is Sulfate/thiosulfate import ATP-binding protein CysA from Nitrosomonas europaea (strain ATCC 19718 / CIP 103999 / KCTC 2705 / NBRC 14298).